Consider the following 207-residue polypeptide: Protein ERP4 (207 aa).

Positions 1-21 are cleaved as a signal peptide; the sequence is MRVFTLIAILFSSSLLTHAFS. The Lumenal segment spans residues 22-174; it reads SNYAPVGISL…TVSSTESRLT (153 aa). Residues 36 to 118 form the GOLD domain; sequence KECLYYDLSS…PKKVEITLEK (83 aa). The helical transmembrane segment at 175–195 threads the bilayer; that stretch reads WLSLLIMGVMVGISIVQALII. The Cytoplasmic segment spans residues 196 to 207; the sequence is QFFFTSRQKNYV.

The protein belongs to the EMP24/GP25L family.

Its subcellular location is the endoplasmic reticulum membrane. Involved in vesicular protein trafficking. The protein is Protein ERP4 (ERP4) of Saccharomyces cerevisiae (strain ATCC 204508 / S288c) (Baker's yeast).